The primary structure comprises 404 residues: Type I restriction enzyme EcoR124I/EcoR124II specificity subunit (404 aa).

Positions 1-153 (MSEMSYLEKL…PIPCPDNPEK (153 aa)) are target-recognition domain 1. Residues 154-199 (SLAIQSEIVRILDKFTALTAELTAELNMRKKQYNYYRDQLLSFKEG) form a conserved region 1 region. The segment at 200 to 349 (EVEWKTLGEI…KLFSFKIPVP (150 aa)) is target-recognition domain 2. Residues 350–404 (NINEQQRIVEILDKFDTLTNSITEGLPREIELRQKQYEYYRDLLFSFPKPETVSN) are conserved region 2.

Belongs to the type-I restriction system S methylase family. In terms of assembly, the type I restriction/modification system is composed of three polypeptides R, M and S; the restriction enzyme has stoichiometry R(2)M(2)S(1) while the methyltransferase is M(2)S(1). There is an equilibrium between R(2)M(2)S(1) and R(1)M(2)S(1); the latter is methylation and translocation proficient but restriction deficient. (Microbial infection) Holoenenzyme interacts with Escherichia phage T7 protein Ocr; this interaction leads to the inhibition of the restriction activity, but may still allow methylation and translocation.

The specificity (S) subunit of a type I restriction enzyme; this subunit dictates DNA sequence specificity. The presence or absence of a 4-residue repeat changes the sequence specificity; a third copy of TAEL inserted at position 179-180 changes the recognition site from 5'-GAAN(6)RTCG-3' (for EcoR124I) to 5'-GAAN(7)RTCG-3' (for EcoR124II). The M and S subunits together form a methyltransferase (MTase) that methylates A-3 on the top and bottom strand of the sequence 5'-GAAN(7)RTCG-3'. In the presence of the R subunit the complex can also act as an endonuclease, binding to the same target sequence but cutting the DNA some distance from this site. Whether the DNA is cut or modified depends on the methylation state of the target sequence. When the target site is unmodified, the DNA is cut. When the target site is hemimethylated, the complex acts as a maintenance MTase modifying the DNA so that both strands become methylated. After locating a non-methylated recognition site, the enzyme complex serves as a molecular motor that translocates DNA in an ATP-dependent manner until a collision occurs that triggers cleavage. The R(1)M(2)S(1) complex translocates an average of 555 bp/second on nicked DNA; the R(2)M(2)S(1) complex translocates at double that speed. The 2 R subunit motors are independent and track along the helical pitch of the DNA, inducing positive supercoiling ahead of themselves. In Escherichia coli, this protein is Type I restriction enzyme EcoR124I/EcoR124II specificity subunit (hsdS).